Reading from the N-terminus, the 333-residue chain is Sphingomyelinase C (333 aa).

The signal sequence occupies residues 1–26; that stretch reads MKGKLLKGVLSLGVGLGALYSGTSAQ. Cysteine 150 and cysteine 186 form a disulfide bridge.

It belongs to the neutral sphingomyelinase family. The cofactor is Mg(2+). In terms of processing, the N-terminus is blocked.

The protein resides in the secreted. The enzyme catalyses a sphingomyelin + H2O = phosphocholine + an N-acylsphing-4-enine + H(+). Activated by cobalt and manganese ions. Its function is as follows. Required, with sphingomyelinase, to effect target cell lysis (hemolysis). The sequence is that of Sphingomyelinase C (cerB) from Bacillus cereus.